The following is a 402-amino-acid chain: 1-deoxy-D-xylulose 5-phosphate reductoisomerase (402 aa).

NADPH is bound by residues threonine 10, glycine 11, serine 12, isoleucine 13, glycine 36, asparagine 38, and asparagine 124. Lysine 125 contributes to the 1-deoxy-D-xylulose 5-phosphate binding site. Position 126 (glutamate 126) interacts with NADPH. Aspartate 150 serves as a coordination point for Mn(2+). 1-deoxy-D-xylulose 5-phosphate contacts are provided by serine 151, glutamate 152, serine 186, and histidine 209. Glutamate 152 contacts Mn(2+). Glycine 215 lines the NADPH pocket. The 1-deoxy-D-xylulose 5-phosphate site is built by serine 222, asparagine 227, lysine 228, and glutamate 231. Position 231 (glutamate 231) interacts with Mn(2+).

It belongs to the DXR family. Mg(2+) serves as cofactor. Mn(2+) is required as a cofactor.

The catalysed reaction is 2-C-methyl-D-erythritol 4-phosphate + NADP(+) = 1-deoxy-D-xylulose 5-phosphate + NADPH + H(+). It functions in the pathway isoprenoid biosynthesis; isopentenyl diphosphate biosynthesis via DXP pathway; isopentenyl diphosphate from 1-deoxy-D-xylulose 5-phosphate: step 1/6. Functionally, catalyzes the NADPH-dependent rearrangement and reduction of 1-deoxy-D-xylulose-5-phosphate (DXP) to 2-C-methyl-D-erythritol 4-phosphate (MEP). This is 1-deoxy-D-xylulose 5-phosphate reductoisomerase from Vibrio cholerae serotype O1 (strain ATCC 39541 / Classical Ogawa 395 / O395).